The following is a 469-amino-acid chain: Citrate synthase, mitochondrial (469 aa).

The N-terminal 30 residues, 1–30, are a transit peptide targeting the mitochondrion; sequence MSFLSVSRLAPKLLNSKNATYFLVAARNAS. Catalysis depends on residues H304 and H350. Residue R359 participates in oxaloacetate binding. The active site involves D405. Positions 431 and 451 each coordinate oxaloacetate.

The protein belongs to the citrate synthase family. In terms of assembly, homodimer.

It is found in the mitochondrion matrix. The enzyme catalyses oxaloacetate + acetyl-CoA + H2O = citrate + CoA + H(+). Its pathway is carbohydrate metabolism; tricarboxylic acid cycle; isocitrate from oxaloacetate: step 1/2. Key enzyme of the Krebs tricarboxylic acid cycle which catalyzes the synthesis of citrate from acetyl coenzyme A and oxaloacetate. The sequence is that of Citrate synthase, mitochondrial (cs) from Thunnus albacares (Yellowfin tuna).